The sequence spans 331 residues: MITLNNQDQPVPFNNSYPDEYEIAALVFYSCIFIIGLFVNITALWVFSCTTKKRTTVTIYMMNVALVDLIFIMTLPFRMFYYAKDEWPFGEYFCQILGALTVFYPSIALWLLAFISADRYMAIVQPKYAKELKNTCKAVLACVGVWIMTLTTTIPLLLLHKDPDKDSTPATCLKISDIVYLKAVNVLNFTRLTFFFLIPLFIMIGCYLVIIHNLLHGRTSKLKPKVKEKSIRIIITLLVQVLVCFMPFHICFAFLMLGTGENSYSPWGAFTTFLMNLSTCLDVILYYIVSKQFQARVISVMLYRNYLRGMRRKSFRSGSLRSLSNINSEML.

The Extracellular portion of the chain corresponds to 1 to 26; sequence MITLNNQDQPVPFNNSYPDEYEIAAL. Residue N14 is glycosylated (N-linked (GlcNAc...) asparagine). The chain crosses the membrane as a helical span at residues 27 to 47; sequence VFYSCIFIIGLFVNITALWVF. The Cytoplasmic segment spans residues 48-56; the sequence is SCTTKKRTT. A helical membrane pass occupies residues 57 to 77; that stretch reads VTIYMMNVALVDLIFIMTLPF. Over 78–95 the chain is Extracellular; sequence RMFYYAKDEWPFGEYFCQ. C94 and C172 are joined by a disulfide. The helical transmembrane segment at 96–116 threads the bilayer; it reads ILGALTVFYPSIALWLLAFIS. Residues 117–138 are Cytoplasmic-facing; the sequence is ADRYMAIVQPKYAKELKNTCKA. The chain crosses the membrane as a helical span at residues 139-159; sequence VLACVGVWIMTLTTTIPLLLL. The Extracellular segment spans residues 160–191; sequence HKDPDKDSTPATCLKISDIVYLKAVNVLNFTR. N188 is a glycosylation site (N-linked (GlcNAc...) asparagine). Residues 192–212 form a helical membrane-spanning segment; sequence LTFFFLIPLFIMIGCYLVIIH. Residues 213–232 are Cytoplasmic-facing; that stretch reads NLLHGRTSKLKPKVKEKSIR. A helical membrane pass occupies residues 233–253; sequence IIITLLVQVLVCFMPFHICFA. Residues 254-268 lie on the Extracellular side of the membrane; sequence FLMLGTGENSYSPWG. Residues 269-289 traverse the membrane as a helical segment; sequence AFTTFLMNLSTCLDVILYYIV. At 290–331 the chain is on the cytoplasmic side; that stretch reads SKQFQARVISVMLYRNYLRGMRRKSFRSGSLRSLSNINSEML. Phosphoserine is present on S322.

Belongs to the G-protein coupled receptor 1 family.

It is found in the cell membrane. The protein resides in the cytoplasmic vesicle membrane. G protein-coupled receptor (GPCR) that plays a role in diverse physiological processes particularly within the immune and nervous systems. Becomes active when triggered by various endogenous ligands including endocannabinoid N-arachidonyl glycine (NAGly), delta-9-tetrahydrocannabinol or resolvin D2/RvD2 derived from the omega-3 fatty acid docosahexaenoic acid (DHA). Upon RvD2 binding, facilitates the resolution of inflammation, aiding in tissue repair and homeostasis. Mechanistically, RvD2 ligation initiates Galphas protein coupling, activation of cAMP-PKA signaling pathway and phosphorylation of STAT3, leading to RvD2-stimulated macrophage phagocytosis. Mediates NAGly-induced process of reorganization of actin filaments and induction of acrosomal exocytosis. Activation by N-arachidonoyl glycine (NAGly) can also induce apoptosis in macrophages. Plays a role in homeostasis of CD8+ subsets of intraepithelial lymphocytes (IELs) (CD8alphaalpha and CD8alphabeta IELs) in small intestine by supporting preferential migration of CD8alphaalpha T-cells to intraepithelial compartment over lamina propria compartment, and by mediating their reconstitution into small intestine after bone marrow transplant. Participates also in hypotensive responses, mediating reduction in intraocular and blood pressure. This Macaca fascicularis (Crab-eating macaque) protein is N-arachidonyl glycine receptor.